The chain runs to 568 residues: Phenylalanine--tRNA ligase beta subunit (568 aa).

Residues 278-353 (LTPKSFEVEL…IAYGYNEIEP (76 aa)) form the B5 domain. Positions 331, 337, 340, and 341 each coordinate Mg(2+).

It belongs to the phenylalanyl-tRNA synthetase beta subunit family. Type 2 subfamily. Tetramer of two alpha and two beta subunits. The cofactor is Mg(2+).

The protein localises to the cytoplasm. It carries out the reaction tRNA(Phe) + L-phenylalanine + ATP = L-phenylalanyl-tRNA(Phe) + AMP + diphosphate + H(+). The chain is Phenylalanine--tRNA ligase beta subunit from Thermococcus gammatolerans (strain DSM 15229 / JCM 11827 / EJ3).